An 812-amino-acid polypeptide reads, in one-letter code: Leucine-rich repeat-containing protein 41 (812 aa).

The tract at residues Ala45–Val54 is interaction with Elongin BC complex. Phosphoserine is present on residues Ser155, Ser276, and Ser326. Residues Gly267–Ala408 form a disordered region. Phosphothreonine is present on Thr327. The span at Thr354–Ser381 shows a compositional bias: low complexity. 2 positions are modified to phosphoserine: Ser357 and Ser373. Over residues Pro387–Arg401 the composition is skewed to basic residues. LRR repeat units lie at residues Trp487–Leu507, Ala518–Leu530, Phe531–Ile555, Ser613–Val635, Leu636–Cys659, Asn701–Glu728, and Ser731–Phe752.

Part of an E3 ubiquitin-protein ligase complex with Elongin BC (ELOB and ELOC), RBX1 and CUL5. Component of a probable ECS(LRRC41) complex which contains CUL5, RNF7/RBX2, Elongin BC and LRRC41. Interacts with CUL5, RNF7, ELOB and ELOC.

Its pathway is protein modification; protein ubiquitination. Functionally, probable substrate recognition component of an ECS (Elongin BC-CUL2/5-SOCS-box protein) E3 ubiquitin ligase complex which mediates the ubiquitination and subsequent proteasomal degradation of target proteins. The protein is Leucine-rich repeat-containing protein 41 (LRRC41) of Homo sapiens (Human).